A 311-amino-acid chain; its full sequence is tRNA-cytidine(32) 2-sulfurtransferase (311 aa).

The PP-loop motif signature appears at 47-52 (SGGKDS). [4Fe-4S] cluster is bound by residues Cys122, Cys125, and Cys213.

This sequence belongs to the TtcA family. As to quaternary structure, homodimer. Requires Mg(2+) as cofactor. The cofactor is [4Fe-4S] cluster.

It is found in the cytoplasm. The catalysed reaction is cytidine(32) in tRNA + S-sulfanyl-L-cysteinyl-[cysteine desulfurase] + AH2 + ATP = 2-thiocytidine(32) in tRNA + L-cysteinyl-[cysteine desulfurase] + A + AMP + diphosphate + H(+). The protein operates within tRNA modification. Its function is as follows. Catalyzes the ATP-dependent 2-thiolation of cytidine in position 32 of tRNA, to form 2-thiocytidine (s(2)C32). The sulfur atoms are provided by the cysteine/cysteine desulfurase (IscS) system. This Salmonella dublin (strain CT_02021853) protein is tRNA-cytidine(32) 2-sulfurtransferase.